Here is a 75-residue protein sequence, read N- to C-terminus: Cruzioseptin-8 (75 aa).

The signal sequence occupies residues 1-22 (MAFLKKCLFLVLFLGLVSLSIC). Residues 23-43 (EEEKREEENEEVQEDDDQSEE) constitute a propeptide that is removed on maturation. The segment at 25–44 (EKREEENEEVQEDDDQSEEK) is disordered. Acidic residues predominate over residues 30-41 (ENEEVQEDDDQS). Q72 carries the glutamine amide modification. The propeptide occupies 74–75 (EQ).

Expressed by the skin glands.

Its subcellular location is the secreted. Its function is as follows. Has antimicrobial activity. In Cruziohyla calcarifer (Splendid leaf frog), this protein is Cruzioseptin-8.